A 768-amino-acid polypeptide reads, in one-letter code: MYRFLGLTIHGGLIKRGLDNSDTRVVSASMGFYGRCVSLGFANKLFDEMPKRDDLAWNEIVMVNLRSGNWEKAVELFREMQFSGAKAYDSTMVKLLQVCSNKEGFAEGRQIHGYVLRLGLESNVSMCNSLIVMYSRNGKLELSRKVFNSMKDRNLSSWNSILSSYTKLGYVDDAIGLLDEMEICGLKPDIVTWNSLLSGYASKGLSKDAIAVLKRMQIAGLKPSTSSISSLLQAVAEPGHLKLGKAIHGYILRNQLWYDVYVETTLIDMYIKTGYLPYARMVFDMMDAKNIVAWNSLVSGLSYACLLKDAEALMIRMEKEGIKPDAITWNSLASGYATLGKPEKALDVIGKMKEKGVAPNVVSWTAIFSGCSKNGNFRNALKVFIKMQEEGVGPNAATMSTLLKILGCLSLLHSGKEVHGFCLRKNLICDAYVATALVDMYGKSGDLQSAIEIFWGIKNKSLASWNCMLMGYAMFGRGEEGIAAFSVMLEAGMEPDAITFTSVLSVCKNSGLVQEGWKYFDLMRSRYGIIPTIEHCSCMVDLLGRSGYLDEAWDFIQTMSLKPDATIWGAFLSSCKIHRDLELAEIAWKRLQVLEPHNSANYMMMINLYSNLNRWEDVERIRNLMRNNRVRVQDLWSWIQIDQTVHIFYAEGKTHPDEGDIYFELYKLVSEMKKSGYVPDTSCIHQDISDSEKEKLLMGHTEKLAMTYGLIKKKGLAPIRVVKNTNICSDSHTVAKYMSVLRNREIVLQEGARVHHFRDGKCSCNDSW.

A mitochondrion-targeting transit peptide spans M1–V25. 16 PPR repeats span residues D22–R52, D53–A87, Y88–S122, N123–R153, N154–P188, D189–P223, S224–N254, D259–K289, N290–P324, D325–P359, N360–P394, N395–C429, D430–K460, S461–P495, D496–R526, and T532–K562. A type E motif region spans residues I567 to D642. The interval Q643 to K673 is type E(+) motif. The tract at residues K674–W768 is type DYW motif.

The protein belongs to the PPR family. PCMP-H subfamily.

The protein localises to the mitochondrion. The protein is Pentatricopeptide repeat-containing protein At4g01030, mitochondrial (PCMP-H65) of Arabidopsis thaliana (Mouse-ear cress).